A 245-amino-acid polypeptide reads, in one-letter code: tRNA (guanine-N(1)-)-methyltransferase (245 aa).

S-adenosyl-L-methionine is bound by residues G112 and 132 to 137; that span reads IGDFVL.

Belongs to the RNA methyltransferase TrmD family. In terms of assembly, homodimer.

The protein resides in the cytoplasm. The enzyme catalyses guanosine(37) in tRNA + S-adenosyl-L-methionine = N(1)-methylguanosine(37) in tRNA + S-adenosyl-L-homocysteine + H(+). In terms of biological role, specifically methylates guanosine-37 in various tRNAs. The protein is tRNA (guanine-N(1)-)-methyltransferase of Geobacter sulfurreducens (strain ATCC 51573 / DSM 12127 / PCA).